The primary structure comprises 225 residues: Cobalt transport protein CbiM (225 aa).

6 consecutive transmembrane segments (helical) span residues 7 to 27 (VLPL…VAIA), 43 to 63 (PFVG…VPVP), 76 to 96 (LAAV…ALLI), 108 to 128 (TLGA…YFAF), 143 to 163 (FLAG…ALAL), and 175 to 195 (FTGV…LEGV).

Belongs to the CbiM family. As to quaternary structure, forms an energy-coupling factor (ECF) transporter complex composed of an ATP-binding protein (A component, CbiO), a transmembrane protein (T component, CbiQ) and 2 possible substrate-capture proteins (S components, CbiM and CbiN) of unknown stoichimetry.

The protein localises to the cell inner membrane. It participates in cofactor biosynthesis; adenosylcobalamin biosynthesis. Its function is as follows. Part of the energy-coupling factor (ECF) transporter complex CbiMNOQ involved in cobalt import. This chain is Cobalt transport protein CbiM, found in Sorangium cellulosum (strain So ce56) (Polyangium cellulosum (strain So ce56)).